The sequence spans 268 residues: Type II methyltransferase M2.DpnII (268 aa).

Belongs to the N(4)/N(6)-methyltransferase family. Homodimer.

The enzyme catalyses a 2'-deoxyadenosine in DNA + S-adenosyl-L-methionine = an N(6)-methyl-2'-deoxyadenosine in DNA + S-adenosyl-L-homocysteine + H(+). Functionally, a beta subtype methylase that recognizes the single- or double-stranded sequence 5'-GATC-3', methylates A-2 on one or both strands (respectively), and protects the DNA from cleavage by the DpnII endonuclease. Further methylates DNA that is already methylated at 5'-GATC-3' sites. Essential for establishment of a previously unmethylated plasmid transformed into the cell as single-stranded DNA, enhances plasmid transfer to DpnII-containing strains of Streptococcus pneumoniae. The polypeptide is Type II methyltransferase M2.DpnII (Streptococcus pneumoniae).